A 203-amino-acid chain; its full sequence is Na(+)-translocating NADH-quinone reductase subunit E (203 aa).

A run of 6 helical transmembrane segments spans residues 12-32 (AVFV…FLAL), 36-56 (MEAA…TVPV), 82-102 (FLGL…LEMV), 115-135 (GVFL…LFMV), 145-165 (LVYG…LAGI), and 181-201 (LGIT…FSGI).

This sequence belongs to the NqrDE/RnfAE family. In terms of assembly, composed of six subunits; NqrA, NqrB, NqrC, NqrD, NqrE and NqrF.

The protein localises to the cell inner membrane. The catalysed reaction is a ubiquinone + n Na(+)(in) + NADH + H(+) = a ubiquinol + n Na(+)(out) + NAD(+). Functionally, NQR complex catalyzes the reduction of ubiquinone-1 to ubiquinol by two successive reactions, coupled with the transport of Na(+) ions from the cytoplasm to the periplasm. NqrA to NqrE are probably involved in the second step, the conversion of ubisemiquinone to ubiquinol. In Hahella chejuensis (strain KCTC 2396), this protein is Na(+)-translocating NADH-quinone reductase subunit E.